Reading from the N-terminus, the 463-residue chain is Glutamate--tRNA ligase (463 aa).

Residues Pro-10–Gly-20 carry the 'HIGH' region motif. Residues Lys-236–Arg-240 carry the 'KMSKS' region motif. Residue Lys-239 participates in ATP binding.

It belongs to the class-I aminoacyl-tRNA synthetase family. Glutamate--tRNA ligase type 1 subfamily. Monomer.

Its subcellular location is the cytoplasm. The enzyme catalyses tRNA(Glu) + L-glutamate + ATP = L-glutamyl-tRNA(Glu) + AMP + diphosphate. Catalyzes the attachment of glutamate to tRNA(Glu) in a two-step reaction: glutamate is first activated by ATP to form Glu-AMP and then transferred to the acceptor end of tRNA(Glu). This chain is Glutamate--tRNA ligase, found in Nitratidesulfovibrio vulgaris (strain DP4) (Desulfovibrio vulgaris).